The primary structure comprises 163 residues: Thiol peroxidase (163 aa).

In terms of domain architecture, Thioredoxin spans 16–162 (LQVGDTAHDF…YDAAIAAVKS (147 aa)). Cysteine 58 functions as the Cysteine sulfenic acid (-SOH) intermediate in the catalytic mechanism. A disulfide bridge connects residues cysteine 58 and cysteine 92.

It belongs to the peroxiredoxin family. Tpx subfamily. As to quaternary structure, homodimer.

The catalysed reaction is a hydroperoxide + [thioredoxin]-dithiol = an alcohol + [thioredoxin]-disulfide + H2O. Functionally, thiol-specific peroxidase that catalyzes the reduction of hydrogen peroxide and organic hydroperoxides to water and alcohols, respectively. Plays a role in cell protection against oxidative stress by detoxifying peroxides. The polypeptide is Thiol peroxidase (Streptococcus sanguinis).